A 134-amino-acid chain; its full sequence is Small ribosomal subunit protein uS8 (134 aa).

It belongs to the universal ribosomal protein uS8 family. In terms of assembly, part of the 30S ribosomal subunit. Contacts proteins S5 and S12.

One of the primary rRNA binding proteins, it binds directly to 16S rRNA central domain where it helps coordinate assembly of the platform of the 30S subunit. In Nitratiruptor sp. (strain SB155-2), this protein is Small ribosomal subunit protein uS8.